The following is a 128-amino-acid chain: Large ribosomal subunit protein bL12 (128 aa).

Belongs to the bacterial ribosomal protein bL12 family. As to quaternary structure, homodimer. Part of the ribosomal stalk of the 50S ribosomal subunit. Forms a multimeric L10(L12)X complex, where L10 forms an elongated spine to which 2 to 4 L12 dimers bind in a sequential fashion. Binds GTP-bound translation factors.

Functionally, forms part of the ribosomal stalk which helps the ribosome interact with GTP-bound translation factors. Is thus essential for accurate translation. This is Large ribosomal subunit protein bL12 from Trichormus variabilis (strain ATCC 29413 / PCC 7937) (Anabaena variabilis).